A 365-amino-acid chain; its full sequence is Tetratricopeptide repeat protein 19, mitochondrial (365 aa).

Residues 1–52 (MFRLLRWRLGRTLLRAAGRRCGGCTARLLPERTGDAGTGAERLRTRGAPARG) constitute a mitochondrion transit peptide. TPR repeat units lie at residues 127-160 (TYTY…LLGG), 220-260 (ANTY…CQEI), 269-302 (IVLM…AREI), and 308-341 (HMVL…AELK).

The protein belongs to the TTC19 family. Binds to the mature mitochondrial complex III dimer, after the incorporation of the Rieske protein UQCRFS1. Interacts with UQCRC1 and UQCRFS1. Interacts with ZFYVE26 and CHMP4B. Post-translationally, proteolytically cleaved by PARL.

The protein localises to the mitochondrion inner membrane. Required for the preservation of the structural and functional integrity of mitochondrial respiratory complex III by allowing the physiological turnover of the Rieske protein UQCRFS1. Involved in the clearance of UQCRFS1 N-terminal fragments, which are produced upon incorporation into the complex III and whose presence is detrimental for its catalytic activity. The polypeptide is Tetratricopeptide repeat protein 19, mitochondrial (Ttc19) (Mus musculus (Mouse)).